A 257-amino-acid polypeptide reads, in one-letter code: GTP cyclohydrolase FolE2 (257 aa).

The protein belongs to the GTP cyclohydrolase IV family.

It catalyses the reaction GTP + H2O = 7,8-dihydroneopterin 3'-triphosphate + formate + H(+). It functions in the pathway cofactor biosynthesis; 7,8-dihydroneopterin triphosphate biosynthesis; 7,8-dihydroneopterin triphosphate from GTP: step 1/1. Its function is as follows. Converts GTP to 7,8-dihydroneopterin triphosphate. The protein is GTP cyclohydrolase FolE2 of Kosmotoga olearia (strain ATCC BAA-1733 / DSM 21960 / TBF 19.5.1).